The sequence spans 110 residues: Small ribosomal subunit protein bS16 (110 aa).

Residues 81–104 (VRPAEVLGKQKQEKERSAKKKDAT) show a composition bias toward basic and acidic residues. Residues 81 to 110 (VRPAEVLGKQKQEKERSAKKKDATASETSE) form a disordered region.

The protein belongs to the bacterial ribosomal protein bS16 family.

This Prochlorococcus marinus (strain NATL1A) protein is Small ribosomal subunit protein bS16.